A 184-amino-acid polypeptide reads, in one-letter code: Threonylcarbamoyl-AMP synthase (184 aa).

The 184-residue stretch at Met-1–Gly-184 folds into the YrdC-like domain.

The protein belongs to the SUA5 family. TsaC subfamily.

It is found in the cytoplasm. The enzyme catalyses L-threonine + hydrogencarbonate + ATP = L-threonylcarbamoyladenylate + diphosphate + H2O. Required for the formation of a threonylcarbamoyl group on adenosine at position 37 (t(6)A37) in tRNAs that read codons beginning with adenine. Catalyzes the conversion of L-threonine, HCO(3)(-)/CO(2) and ATP to give threonylcarbamoyl-AMP (TC-AMP) as the acyladenylate intermediate, with the release of diphosphate. This Actinobacillus pleuropneumoniae serotype 7 (strain AP76) protein is Threonylcarbamoyl-AMP synthase.